We begin with the raw amino-acid sequence, 267 residues long: NAD kinase (267 aa).

Residue aspartate 45 is the Proton acceptor of the active site. Residues 45-46 (DG), 122-123 (NE), arginine 148, aspartate 150, 161-166 (TAYNKS), alanine 185, and glutamine 223 contribute to the NAD(+) site.

It belongs to the NAD kinase family. A divalent metal cation is required as a cofactor.

It localises to the cytoplasm. It carries out the reaction NAD(+) + ATP = ADP + NADP(+) + H(+). Involved in the regulation of the intracellular balance of NAD and NADP, and is a key enzyme in the biosynthesis of NADP. Catalyzes specifically the phosphorylation on 2'-hydroxyl of the adenosine moiety of NAD to yield NADP. The chain is NAD kinase from Levilactobacillus brevis (strain ATCC 367 / BCRC 12310 / CIP 105137 / JCM 1170 / LMG 11437 / NCIMB 947 / NCTC 947) (Lactobacillus brevis).